The following is a 578-amino-acid chain: Proline--tRNA ligase (578 aa).

It belongs to the class-II aminoacyl-tRNA synthetase family. ProS type 1 subfamily. In terms of assembly, homodimer.

The protein resides in the cytoplasm. It catalyses the reaction tRNA(Pro) + L-proline + ATP = L-prolyl-tRNA(Pro) + AMP + diphosphate. Its function is as follows. Catalyzes the attachment of proline to tRNA(Pro) in a two-step reaction: proline is first activated by ATP to form Pro-AMP and then transferred to the acceptor end of tRNA(Pro). As ProRS can inadvertently accommodate and process non-cognate amino acids such as alanine and cysteine, to avoid such errors it has two additional distinct editing activities against alanine. One activity is designated as 'pretransfer' editing and involves the tRNA(Pro)-independent hydrolysis of activated Ala-AMP. The other activity is designated 'posttransfer' editing and involves deacylation of mischarged Ala-tRNA(Pro). The misacylated Cys-tRNA(Pro) is not edited by ProRS. In Burkholderia pseudomallei (strain K96243), this protein is Proline--tRNA ligase.